Here is a 472-residue protein sequence, read N- to C-terminus: Succinate-semialdehyde dehydrogenase [NADP(+)] (472 aa).

NADP(+) contacts are provided by residues 134–135 (WN), 158–161 (KHAS), and 210–211 (GS). Glutamate 232 (proton acceptor) is an active-site residue. Leucine 233 is an NADP(+) binding site. Cysteine 266 acts as the Nucleophile in catalysis. Residue glutamate 363 participates in NADP(+) binding.

This sequence belongs to the aldehyde dehydrogenase family.

The catalysed reaction is succinate semialdehyde + NADP(+) + H2O = succinate + NADPH + 2 H(+). Catalyzes the NADP(+)-dependent oxidation of succinate semialdehyde to succinate. It is believed to be the main source of succinate semialdehyde dehydrogenase activity in Mycobacterium. The chain is Succinate-semialdehyde dehydrogenase [NADP(+)] (gabD1) from Mycolicibacterium paratuberculosis (strain ATCC BAA-968 / K-10) (Mycobacterium paratuberculosis).